Reading from the N-terminus, the 950-residue chain is Lon protease homolog, mitochondrial (950 aa).

The transit peptide at 1 to 65 (MAASTGYVRL…VPMGGGQWRG (65 aa)) directs the protein to the mitochondrion. Disordered regions lie at residues 67 to 94 (WDAG…SGEG) and 212 to 243 (PEGL…LGAK). In terms of domain architecture, Lon N-terminal spans 112 to 360 (LPLIAISRNP…KALSLLKKEF (249 aa)). The segment covering 224–233 (KSRRKLKRGK) has biased composition (basic residues). 513 to 520 (GPPGVGKT) provides a ligand contact to ATP. Positions 749-939 (VTPPGVVMGL…RDIFRIAFPL (191 aa)) constitute a Lon proteolytic domain. Catalysis depends on residues S845 and K888.

It belongs to the peptidase S16 family. In terms of assembly, homohexamer. Organized in a ring with a central cavity. The ATP-binding and proteolytic domains (AP-domain) form a hexameric chamber, while the N-terminal domain is arranged as a trimer of dimers. DNA and RNA binding is stimulated by substrate and inhibited by ATP binding. Interacts with TWNK and mitochondrial DNA polymerase subunit POLG.

The protein localises to the mitochondrion matrix. The catalysed reaction is Hydrolysis of proteins in presence of ATP.. ATP-dependent serine protease that mediates the selective degradation of misfolded, unassembled or oxidatively damaged polypeptides as well as certain short-lived regulatory proteins in the mitochondrial matrix. Endogenous substrates include mitochondrial steroidogenic acute regulatory (StAR) protein, DELE1, helicase Twinkle (TWNK) and the large ribosomal subunit protein MRPL32/bL32m. MRPL32/bL32m is protected from degradation by LONP1 when it is bound to a nucleic acid (RNA), but TWNK is not. May also have a chaperone function in the assembly of inner membrane protein complexes. Participates in the regulation of mitochondrial gene expression and in the maintenance of the integrity of the mitochondrial genome. Binds to mitochondrial promoters and RNA in a single-stranded, site-specific, and strand-specific manner. May regulate mitochondrial DNA replication and/or gene expression using site-specific, single-stranded DNA binding to target the degradation of regulatory proteins binding to adjacent sites in mitochondrial promoters. This is Lon protease homolog, mitochondrial (Lonp1) from Rattus norvegicus (Rat).